We begin with the raw amino-acid sequence, 180 residues long: Ribosome rescue factor SmrB (180 aa).

In terms of domain architecture, Smr spans 98-173 (LDLHGLTQLI…GDAALLLLVE (76 aa)).

The protein belongs to the SmrB family. In terms of assembly, associates with collided ribosomes, but not with correctly translating polysomes.

Its function is as follows. Acts as a ribosome collision sensor. Detects stalled/collided disomes (pairs of ribosomes where the leading ribosome is stalled and a second ribosome has collided with it) and endonucleolytically cleaves mRNA at the 5' boundary of the stalled ribosome. Stalled/collided disomes form a new interface (primarily via the 30S subunits) that binds SmrB. Cleaved mRNA becomes available for tmRNA ligation, leading to ribosomal subunit dissociation and rescue of stalled ribosomes. The chain is Ribosome rescue factor SmrB from Proteus mirabilis (strain HI4320).